A 243-amino-acid polypeptide reads, in one-letter code: Sec-independent protein translocase protein TATB, chloroplastic (243 aa).

A chloroplast-targeting transit peptide spans 1–67; the sequence is MTPTANLLLP…SRTRRRNVIC (67 aa). The Lumenal portion of the chain corresponds to 68–69; the sequence is AS. A helical transmembrane segment spans residues 70–90; it reads LFGVGAPEALVIGVVALLVFG. The Stromal segment spans residues 91 to 243; the sequence is PKGLAEVARN…NKSQKAEGER (153 aa). Disordered regions lie at residues 129–165 and 178–243; these read EIGIDEVSQSTNYRPTTMNNNQQPAADPNVKPEPAPY and IAAS…EGER. Polar residues-rich tracts occupy residues 135–152 and 187–204; these read VSQSTNYRPTTMNNNQQP and NPQQPATSQQQEEAPTTP.

Belongs to the TatB family. In terms of assembly, in thylakoid membranes, TATC and TATB form a large receptor complex, containing about eight TATC-TATB pairs, which binds the precursor protein. Twin arginine signal peptide promotes pH-triggered docking of TATA oligomers to TATC-TATB receptor complex, inducing a conformational switch of TATA that results in activation of the translocase. TATA dissociates from TATC-TATB upon completion of translocation.

Its subcellular location is the plastid. The protein localises to the chloroplast thylakoid membrane. Functionally, part of the twin-arginine translocation (Tat) system that transports large folded proteins containing a characteristic twin-arginine motif in their signal peptide across the thylakoid membrane. Involved in delta pH-dependent protein transport required for chloroplast development, especially thylakoid membrane formation. TATC and TATB mediate precursor recognition, whereas TATA facilitates translocation. This is Sec-independent protein translocase protein TATB, chloroplastic from Zea mays (Maize).